Here is a 212-residue protein sequence, read N- to C-terminus: Thymidylate kinase (212 aa).

Position 11 to 18 (11 to 18 (GPEGAGKT)) interacts with ATP.

This sequence belongs to the thymidylate kinase family.

The enzyme catalyses dTMP + ATP = dTDP + ADP. Functionally, phosphorylation of dTMP to form dTDP in both de novo and salvage pathways of dTTP synthesis. This chain is Thymidylate kinase, found in Streptococcus pneumoniae (strain P1031).